The sequence spans 74 residues: Antimicrobial peptide HsAp1 (74 aa).

The first 21 residues, 1–21 (MSRRVILTLVLVTILVKTMAG), serve as a signal peptide directing secretion. Positions 22–33 (MESKKVETTDEI) are excised as a propeptide. Proline 65 is modified (proline amide). A propeptide spanning residues 69–74 (AISEQT) is cleaved from the precursor.

It belongs to the non-disulfide-bridged peptide (NDBP) superfamily. Medium-length antimicrobial peptide (group 3) family. In terms of tissue distribution, expressed by the venom gland.

The protein localises to the secreted. It localises to the target cell membrane. Possesses antimicrobial activity against both Gram-negative (MIC=23.8-51.2 uM) and Gram-positive (MIC=11.8-46.5 uM) bacteria, as well as against the fungus C.tropicalis (MIC=48.6 uM). Also possesses a relatively high hemolytic activity. May act by disrupting the integrity of the bacterial cell membrane. The chain is Antimicrobial peptide HsAp1 from Heterometrus spinifer (Asia giant forest scorpion).